The sequence spans 430 residues: Dihydroorotase (430 aa).

Zn(2+) is bound by residues H57 and H59. Substrate contacts are provided by residues 59–61 and N91; that span reads HLR. The Zn(2+) site is built by D151, H178, and H231. Residue N277 participates in substrate binding. D304 contacts Zn(2+). Residue D304 is part of the active site. Residues H308 and 322 to 323 contribute to the substrate site; that span reads PG.

It belongs to the metallo-dependent hydrolases superfamily. DHOase family. Class I DHOase subfamily. Zn(2+) is required as a cofactor.

The catalysed reaction is (S)-dihydroorotate + H2O = N-carbamoyl-L-aspartate + H(+). Its pathway is pyrimidine metabolism; UMP biosynthesis via de novo pathway; (S)-dihydroorotate from bicarbonate: step 3/3. Functionally, catalyzes the reversible cyclization of carbamoyl aspartate to dihydroorotate. The chain is Dihydroorotase from Mycobacterium tuberculosis (strain ATCC 25618 / H37Rv).